The chain runs to 282 residues: 2-dehydro-3-deoxyphosphooctonate aldolase (282 aa).

The protein belongs to the KdsA family.

It is found in the cytoplasm. It carries out the reaction D-arabinose 5-phosphate + phosphoenolpyruvate + H2O = 3-deoxy-alpha-D-manno-2-octulosonate-8-phosphate + phosphate. Its pathway is carbohydrate biosynthesis; 3-deoxy-D-manno-octulosonate biosynthesis; 3-deoxy-D-manno-octulosonate from D-ribulose 5-phosphate: step 2/3. It functions in the pathway bacterial outer membrane biogenesis; lipopolysaccharide biosynthesis. The chain is 2-dehydro-3-deoxyphosphooctonate aldolase from Shewanella halifaxensis (strain HAW-EB4).